We begin with the raw amino-acid sequence, 122 residues long: MASETPRVDPTEISNVNAPVFRIIAQIKSQPTESQLILQSPTISSKNGSEVEMITLNNIRVSMNKTFEIDSWYEFVCRNNDDGELGFLILDAVLCKFKENEDLSLNGVVALQRLCKKYPEIY.

The protein belongs to the replication factor A protein 3 family. In terms of assembly, component of the heterotrimeric canonical replication protein A complex (RPA). The N-terminus is blocked.

It is found in the nucleus. Functionally, as part of the replication protein A (RPA/RP-A), a single-stranded DNA-binding heterotrimeric complex, may play an essential role in DNA replication, recombination and repair. Binds and stabilizes single-stranded DNA intermediates, preventing complementary DNA reannealing and recruiting different proteins involved in DNA metabolism. Stimulates the activity of a cognate strand exchange protein (SEP1). The protein is Replication factor A protein 3 (RFA3) of Saccharomyces cerevisiae (strain ATCC 204508 / S288c) (Baker's yeast).